The chain runs to 270 residues: Protoheme IX farnesyltransferase (270 aa).

The next 7 membrane-spanning stretches (helical) occupy residues 13–30, 33–53, 95–115, 129–149, 156–176, 207–227, and 249–269; these read LALL…LVPD, HATL…GSAL, LLVL…ALAW, LALA…WTLA, YRII…FWLF, LWLG…LMAP, and EATL…ALLL.

This sequence belongs to the UbiA prenyltransferase family. Protoheme IX farnesyltransferase subfamily.

The protein resides in the cell inner membrane. The catalysed reaction is heme b + (2E,6E)-farnesyl diphosphate + H2O = Fe(II)-heme o + diphosphate. Its pathway is porphyrin-containing compound metabolism; heme O biosynthesis; heme O from protoheme: step 1/1. Its function is as follows. Converts heme B (protoheme IX) to heme O by substitution of the vinyl group on carbon 2 of heme B porphyrin ring with a hydroxyethyl farnesyl side group. The protein is Protoheme IX farnesyltransferase of Geobacter sulfurreducens (strain ATCC 51573 / DSM 12127 / PCA).